The sequence spans 422 residues: Calpain-2 catalytic subunit (422 aa).

In terms of domain architecture, Calpain catalytic spans 1–66 (QKLIRIRNPW…YSRLEICNLT (66 aa)). Asparagine 8 is a catalytic residue. 3 residues coordinate Ca(2+): glutamate 14, aspartate 21, and glutamate 45. The domain III stretch occupies residues 67–236 (PDTLTSDTYK…KKADYQAVDD (170 aa)). The segment at 237–251 (EIEADLEEADVSEDD) is linker. Residues 252–422 (IDDGFRRLFA…LISWLCFSVL (171 aa)) form a domain IV region. Residues alanine 264, aspartate 267, glutamate 269, glutamate 274, aspartate 307, aspartate 309, threonine 311, lysine 313, glutamate 318, aspartate 337, aspartate 339, serine 341, threonine 343, glutamate 348, aspartate 380, and asparagine 383 each coordinate Ca(2+). 2 EF-hand domains span residues 294–327 (LSIETCKIMVDMLDSDGTGKLGLKEFYVLWTKIQ) and 324–359 (TKIQKYQKIYREIDVDRSGTMNSYEMRKALEEAGFK). Residues 389–422 (VRLETLFKIFKQLDPDNTGMIQLDLISWLCFSVL) enclose the EF-hand 3 domain.

It belongs to the peptidase C2 family. As to quaternary structure, forms a heterodimer with a small (regulatory) subunit (CAPNS1). Interacts with CPEB3; this leads to cleavage of CPEB3. Ca(2+) serves as cofactor. In terms of tissue distribution, ubiquitous.

The protein resides in the cytoplasm. It localises to the cell membrane. It carries out the reaction Broad endopeptidase specificity.. Its activity is regulated as follows. Activated by 200-1000 micromolar concentrations of calcium and inhibited by calpastatin. Calcium-regulated non-lysosomal thiol-protease which catalyzes limited proteolysis of substrates involved in cytoskeletal remodeling and signal transduction. Proteolytically cleaves MYOC at 'Arg-226'. Proteolytically cleaves CPEB3 following neuronal stimulation which abolishes CPEB3 translational repressor activity, leading to translation of CPEB3 target mRNAs. In Oryctolagus cuniculus (Rabbit), this protein is Calpain-2 catalytic subunit (CAPN2).